Here is a 107-residue protein sequence, read N- to C-terminus: Large ribosomal subunit protein uL24 (107 aa).

This sequence belongs to the universal ribosomal protein uL24 family. As to quaternary structure, part of the 50S ribosomal subunit.

Its function is as follows. One of two assembly initiator proteins, it binds directly to the 5'-end of the 23S rRNA, where it nucleates assembly of the 50S subunit. Functionally, one of the proteins that surrounds the polypeptide exit tunnel on the outside of the subunit. In Malacoplasma penetrans (strain HF-2) (Mycoplasma penetrans), this protein is Large ribosomal subunit protein uL24.